A 729-amino-acid chain; its full sequence is Sodium-dependent neutral amino acid transporter B(0)AT2 (729 aa).

Residues 1 to 69 (MPKNSKVVKR…ERPAWNSKLQ (69 aa)) are Cytoplasmic-facing. A phosphoserine mark is found at Ser25 and Ser55. Residues 42–61 (DVQEEKDTDAEDGSEADDER) form a disordered region. Acidic residues predominate over residues 43-59 (VQEEKDTDAEDGSEADD). The next 3 helical transmembrane spans lie at 70-90 (YILA…FPYL), 98-117 (AYLL…LFFL), and 142-162 (GIGF…NVII). Topologically, residues 163 to 225 (GWTLFYFSQS…SSISDSGGLN (63 aa)) are extracellular. Asn187 carries an N-linked (GlcNAc...) asparagine glycan. Transmembrane regions (helical) follow at residues 226–244 (WKMT…LAMI) and 253–270 (IMYF…CFLI). N-linked (GlcNAc...) asparagine glycosylation is present at Asn276. 2 consecutive transmembrane segments (helical) span residues 306-323 (VFFA…FSSY) and 335-356 (VLVS…FAVL). The Extracellular segment spans residues 357-452 (GFKANIVNEK…FIAFTEAMTH (96 aa)). Asn383 and Asn394 each carry an N-linked (GlcNAc...) asparagine glycan. The next 5 helical transmembrane spans lie at 453 to 472 (FPAS…NLGL), 496 to 514 (ILTV…IFVQ), 530 to 550 (TLPL…VYGI), 571 to 592 (YMWK…IVNM), and 620 to 642 (VVCF…IRRC). The Cytoplasmic segment spans residues 643 to 729 (NLIDDSSGNL…DMPDMPESDL (87 aa)). 3 positions are modified to phosphoserine: Ser687, Ser699, and Ser701.

Belongs to the sodium:neurotransmitter symporter (SNF) (TC 2.A.22) family. SLC6A15 subfamily. As to expression, significant expressed in brain, lung and kidney. In brain, mainly expressed int the cortex, the cerebellum and the brain stem.

It localises to the membrane. It carries out the reaction L-pipecolate(in) + Na(+)(in) = L-pipecolate(out) + Na(+)(out). The catalysed reaction is L-leucine(in) + Na(+)(in) = L-leucine(out) + Na(+)(out). The enzyme catalyses L-isoleucine(in) + Na(+)(in) = L-isoleucine(out) + Na(+)(out). It catalyses the reaction L-methionine(in) + Na(+)(in) = L-methionine(out) + Na(+)(out). It carries out the reaction L-proline(in) + Na(+)(in) = L-proline(out) + Na(+)(out). The catalysed reaction is L-alanine(in) + Na(+)(in) = L-alanine(out) + Na(+)(out). The enzyme catalyses L-asparagine(in) + Na(+)(in) = L-asparagine(out) + Na(+)(out). It catalyses the reaction L-valine(in) + Na(+)(in) = L-valine(out) + Na(+)(out). It carries out the reaction L-cysteine(in) + Na(+)(in) = L-cysteine(out) + Na(+)(out). The catalysed reaction is L-glutamine(in) + Na(+)(in) = L-glutamine(out) + Na(+)(out). The enzyme catalyses L-serine(in) + Na(+)(in) = L-serine(out) + Na(+)(out). It catalyses the reaction L-threonine(in) + Na(+)(in) = L-threonine(out) + Na(+)(out). It carries out the reaction L-phenylalanine(in) + Na(+)(in) = L-phenylalanine(out) + Na(+)(out). Its function is as follows. Functions as a sodium-dependent neutral amino acid transporter. Exhibits preference for methionine and for the branched-chain amino acids, particularly leucine, valine and isoleucine. Can also transport low-affinity substrates such as alanine, phenylalanine, glutamine and pipecolic acid. Mediates the saturable, pH-sensitive and electrogenic cotransport of proline and sodium ions with a stoichiometry of 1:1. May have a role as transporter for neurotransmitter precursors into neurons. In contrast to other members of the neurotransmitter transporter family, does not appear to be chloride-dependent. This is Sodium-dependent neutral amino acid transporter B(0)AT2 (Slc6a15) from Mus musculus (Mouse).